A 453-amino-acid polypeptide reads, in one-letter code: Adenosylmethionine-8-amino-7-oxononanoate aminotransferase (453 aa).

118 to 119 (GS) provides a ligand contact to pyridoxal 5'-phosphate. Y151 is a substrate binding site. D258 provides a ligand contact to pyridoxal 5'-phosphate. Substrate contacts are provided by K287, G322, and R417. K287 carries the N6-(pyridoxal phosphate)lysine modification.

It belongs to the class-III pyridoxal-phosphate-dependent aminotransferase family. BioA subfamily. In terms of assembly, homodimer. Pyridoxal 5'-phosphate is required as a cofactor.

It is found in the cytoplasm. It carries out the reaction (8S)-8-amino-7-oxononanoate + S-adenosyl-L-methionine = S-adenosyl-4-methylsulfanyl-2-oxobutanoate + (7R,8S)-7,8-diammoniononanoate. It participates in cofactor biosynthesis; biotin biosynthesis; 7,8-diaminononanoate from 8-amino-7-oxononanoate (SAM route): step 1/1. Functionally, catalyzes the transfer of the alpha-amino group from S-adenosyl-L-methionine (SAM) to 7-keto-8-aminopelargonic acid (KAPA) to form 7,8-diaminopelargonic acid (DAPA). It is the only aminotransferase known to utilize SAM as an amino donor. The protein is Adenosylmethionine-8-amino-7-oxononanoate aminotransferase of Geobacter sulfurreducens (strain ATCC 51573 / DSM 12127 / PCA).